Consider the following 185-residue polypeptide: Protein TIFY 5 (185 aa).

In terms of domain architecture, Tify spans 38–72; that stretch reads AAEARRNLTIFYNGRMCAVNVTELQARTIISMASQ. The segment at 77–185 is disordered; sequence KQQQQQIQGR…RAAAPLYARR (109 aa). The span at 137-157 shows a compositional bias: low complexity; the sequence is PRAGLQAAAAAAPTMNQPPAA. The short motif at 155 to 182 is the Jas element; sequence PAASGLSMKRSLQRFLEKRKTRAAAPLY. A Nuclear localization signal motif is present at residues 162 to 169; sequence MKRSLQRF.

This sequence belongs to the TIFY/JAZ family. Ubiquitinated. Targeted for degradation by the SCF(COI1) E3 ubiquitin ligase-proteasome pathway during jasmonate signaling.

The protein resides in the nucleus. Its function is as follows. Repressor of jasmonate responses. This chain is Protein TIFY 5, found in Oryza sativa subsp. indica (Rice).